A 516-amino-acid chain; its full sequence is Apolipoprotein N-acyltransferase (516 aa).

The next 6 helical transmembrane spans lie at 24–44 (LAQA…LLYL), 58–78 (GWCY…ISIH), 90–110 (LLTL…AWLW), 125–145 (LAFA…LTGF), 163–183 (APLG…ALLV), and 192–212 (PPAL…GLAL). Residues 230–471 (VQGNVEQNLK…RAVLYGEVTP (242 aa)) form the CN hydrolase domain. The Proton acceptor role is filled by Glu270. Residue Lys331 is part of the active site. Cys383 acts as the Nucleophile in catalysis. Residues 479–499 (LRWRAWPLAGLAVLLLGWALL) form a helical membrane-spanning segment.

The protein belongs to the CN hydrolase family. Apolipoprotein N-acyltransferase subfamily.

The protein localises to the cell inner membrane. It carries out the reaction N-terminal S-1,2-diacyl-sn-glyceryl-L-cysteinyl-[lipoprotein] + a glycerophospholipid = N-acyl-S-1,2-diacyl-sn-glyceryl-L-cysteinyl-[lipoprotein] + a 2-acyl-sn-glycero-3-phospholipid + H(+). Its pathway is protein modification; lipoprotein biosynthesis (N-acyl transfer). Functionally, catalyzes the phospholipid dependent N-acylation of the N-terminal cysteine of apolipoprotein, the last step in lipoprotein maturation. This chain is Apolipoprotein N-acyltransferase, found in Azotobacter vinelandii (strain DJ / ATCC BAA-1303).